A 179-amino-acid chain; its full sequence is ATP-dependent protease subunit HslV (179 aa).

Threonine 7 is a catalytic residue. Residues glycine 162, cysteine 165, and threonine 168 each contribute to the Na(+) site.

The protein belongs to the peptidase T1B family. HslV subfamily. In terms of assembly, a double ring-shaped homohexamer of HslV is capped on each side by a ring-shaped HslU homohexamer. The assembly of the HslU/HslV complex is dependent on binding of ATP.

It is found in the cytoplasm. The enzyme catalyses ATP-dependent cleavage of peptide bonds with broad specificity.. Its activity is regulated as follows. Allosterically activated by HslU binding. Protease subunit of a proteasome-like degradation complex believed to be a general protein degrading machinery. The chain is ATP-dependent protease subunit HslV from Teredinibacter turnerae (strain ATCC 39867 / T7901).